We begin with the raw amino-acid sequence, 355 residues long: Alanine racemase (355 aa).

Lys-34 functions as the Proton acceptor; specific for D-alanine in the catalytic mechanism. N6-(pyridoxal phosphate)lysine is present on Lys-34. Substrate is bound at residue Arg-133. Residue Tyr-249 is the Proton acceptor; specific for L-alanine of the active site. Met-297 serves as a coordination point for substrate.

Belongs to the alanine racemase family. Pyridoxal 5'-phosphate is required as a cofactor.

It carries out the reaction L-alanine = D-alanine. The protein operates within amino-acid biosynthesis; D-alanine biosynthesis; D-alanine from L-alanine: step 1/1. Its function is as follows. Catalyzes the interconversion of L-alanine and D-alanine. May also act on other amino acids. This chain is Alanine racemase (alr), found in Rickettsia africae (strain ESF-5).